A 535-amino-acid chain; its full sequence is Sodium channel protein Nach (535 aa).

Residues 1-49 (MGHQEELKPEQVDLKVTPFVGYLRRTWSDFCATSSIHGLKYTRDEDTNK) lie on the Cytoplasmic side of the membrane. The helical transmembrane segment at 50 to 70 (IVHLVWLLISVVMFICAVVMA) threads the bilayer. Over 71 to 471 (RTFYMDYRSS…LVSNLGSAFS (401 aa)) the chain is Extracellular. 3 N-linked (GlcNAc...) asparagine glycosylation sites follow: N165, N239, and N367. The helical transmembrane segment at 472–492 (LFVGMSMLSVVEIIYYFSVIL) threads the bilayer. The Cytoplasmic segment spans residues 493–535 (RKNYKLECETRSQMLHKKPKFAWPKANDTHSKEQKSVFIIHKS).

The protein belongs to the amiloride-sensitive sodium channel (TC 1.A.6) family. As to expression, embryonic and larval tracheal system; dorsal trunk (but not at fusion with transverse connective), several branches and terminal cells. Also expressed in adult tracheal system; dorsal trunk, but not at the spiracles.

The protein resides in the membrane. Part of a complex that plays a role in tracheal liquid clearance. Probable role in sodium transport. This Drosophila melanogaster (Fruit fly) protein is Sodium channel protein Nach (Nach).